We begin with the raw amino-acid sequence, 474 residues long: tRNA-2-methylthio-N(6)-dimethylallyladenosine synthase (474 aa).

One can recognise an MTTase N-terminal domain in the interval 3-120; that stretch reads KKLHIKTWGC…LPEMINQVKG (118 aa). [4Fe-4S] cluster is bound by residues Cys12, Cys49, Cys83, Cys157, Cys161, and Cys164. A Radical SAM core domain is found at 143 to 375; that stretch reads RAEGPTAFVS…QERINQQAMA (233 aa). In terms of domain architecture, TRAM spans 378–441; the sequence is RRMLGTTQRI…PNSLRGKVIR (64 aa).

The protein belongs to the methylthiotransferase family. MiaB subfamily. As to quaternary structure, monomer. It depends on [4Fe-4S] cluster as a cofactor.

Its subcellular location is the cytoplasm. The enzyme catalyses N(6)-dimethylallyladenosine(37) in tRNA + (sulfur carrier)-SH + AH2 + 2 S-adenosyl-L-methionine = 2-methylsulfanyl-N(6)-dimethylallyladenosine(37) in tRNA + (sulfur carrier)-H + 5'-deoxyadenosine + L-methionine + A + S-adenosyl-L-homocysteine + 2 H(+). In terms of biological role, catalyzes the methylthiolation of N6-(dimethylallyl)adenosine (i(6)A), leading to the formation of 2-methylthio-N6-(dimethylallyl)adenosine (ms(2)i(6)A) at position 37 in tRNAs that read codons beginning with uridine. The sequence is that of tRNA-2-methylthio-N(6)-dimethylallyladenosine synthase from Cronobacter sakazakii (strain ATCC BAA-894) (Enterobacter sakazakii).